We begin with the raw amino-acid sequence, 617 residues long: pH-sensitive chloride channel 2 (617 aa).

The signal sequence occupies residues 1–28; that stretch reads MHSPGAAAYVFLQCLVALVAAVIAQSGA. The Extracellular segment spans residues 29–387; sequence DQPPTTVVEV…VHLAREMGFY (359 aa). N-linked (GlcNAc...) asparagine glycosylation is present at Asn57. Residues 82-96 are compositionally biased toward low complexity; sequence TVSVDSSSTTTVAST. Residues 82 to 110 form a disordered region; that stretch reads TVSVDSSSTTTVASTQEPTSTTERTMSPE. Positions 97–106 are enriched in polar residues; the sequence is QEPTSTTERT. Asn130 carries an N-linked (GlcNAc...) asparagine glycan. Over residues 131–147 the composition is skewed to basic and acidic residues; sequence ATDDNRPDAKSSGKDSE. The disordered stretch occupies residues 131–155; the sequence is ATDDNRPDAKSSGKDSECPTLEGAD. Residues Asn184, Asn234, Asn351, and Asn370 are each glycosylated (N-linked (GlcNAc...) asparagine). The chain crosses the membrane as a helical span at residues 388–408; the sequence is MMDYFIPSIMLVAISWVTFWL. The Cytoplasmic segment spans residues 409–414; that stretch reads QADQSA. Residues 415–434 traverse the membrane as a helical segment; that stretch reads PRITLGTSTMLTFITLASAQ. The Extracellular segment spans residues 435–447; sequence GKTLPKVSYIKAS. A helical membrane pass occupies residues 448 to 468; it reads EIWFLGCTGFIFGSLVEFAFV. At 469–596 the chain is on the cytoplasmic side; that stretch reads NTIWRRKRNV…VAIWIDKRSR (128 aa). Residues 597 to 617 traverse the membrane as a helical segment; the sequence is FVFPIAFVIFNIFYWTFVYYV.

It belongs to the ligand-gated ion channel (TC 1.A.9) family.

It localises to the cell membrane. The catalysed reaction is chloride(in) = chloride(out). Ligand and pH-gated channel that mediates chloride transport in the mid-gut and thereby may function in larval metabolism and fluid homeostasis. Channel opening is triggered by zinc binding or, to a lesser extent, an increase in extracellular pH. The sequence is that of pH-sensitive chloride channel 2 from Anopheles gambiae (African malaria mosquito).